A 177-amino-acid chain; its full sequence is Large ribosomal subunit protein uL5 (177 aa).

Belongs to the universal ribosomal protein uL5 family. In terms of assembly, part of the 50S ribosomal subunit; part of the 5S rRNA/L5/L18/L25 subcomplex. Contacts the 5S rRNA and the P site tRNA. Forms a bridge to the 30S subunit in the 70S ribosome.

This is one of the proteins that bind and probably mediate the attachment of the 5S RNA into the large ribosomal subunit, where it forms part of the central protuberance. In the 70S ribosome it contacts protein S13 of the 30S subunit (bridge B1b), connecting the 2 subunits; this bridge is implicated in subunit movement. Contacts the P site tRNA; the 5S rRNA and some of its associated proteins might help stabilize positioning of ribosome-bound tRNAs. The chain is Large ribosomal subunit protein uL5 from Ehrlichia ruminantium (strain Welgevonden).